The sequence spans 111 residues: WAP four-disulfide core domain protein 12 (111 aa).

The first 23 residues, 1–23 (MGSSSFLVLMVSLALVTLVVVEG), serve as a signal peptide directing secretion. In terms of domain architecture, WAP spans 27–74 (GIEKAGVCPADNVRCFKSNPPQCHTDQDCLGERKCCYLHCGFKCVIPV). Intrachain disulfides connect C34/C62, C41/C66, C49/C61, and C55/C70. The interval 80–111 (GGNKDEDVSGPHPEPGWEAKSPGSSSTGCPQI) is disordered. The segment covering 101–111 (PGSSSTGCPQI) has biased composition (polar residues).

The protein resides in the secreted. Its function is as follows. Antibacterial protein. Putative acid-stable proteinase inhibitor. This chain is WAP four-disulfide core domain protein 12 (WFDC12), found in Colobus guereza (Mantled guereza).